We begin with the raw amino-acid sequence, 562 residues long: SPI-1 type 3 secretion system secretin (562 aa).

The first 24 residues, 1-24 (MKTHILLARVLACAALVLVTPGYS), serve as a signal peptide directing secretion.

It belongs to the bacterial secretin family. T3SS SctC subfamily. The core secretion machinery of the T3SS is composed of approximately 20 different proteins, including cytoplasmic components, a base, an export apparatus and a needle. This subunit is part of the base, which anchors the injectisome in the bacterial cell envelope. Forms a stable homooligomeric complex. The complex is composed of 15 subunits.

It is found in the cell outer membrane. Its function is as follows. Component of the type III secretion system (T3SS), also called injectisome, which is used to inject bacterial effector proteins into eukaryotic host cells. Forms a ring-shaped multimeric structure with an apparent central pore in the outer membrane. The polypeptide is SPI-1 type 3 secretion system secretin (Salmonella typhimurium (strain LT2 / SGSC1412 / ATCC 700720)).